We begin with the raw amino-acid sequence, 181 residues long: UPF0200 protein Ta0179 (181 aa).

6–13 (GMPGAGKD) serves as a coordination point for ATP.

It belongs to the UPF0200 family.

This chain is UPF0200 protein Ta0179, found in Thermoplasma acidophilum (strain ATCC 25905 / DSM 1728 / JCM 9062 / NBRC 15155 / AMRC-C165).